A 227-amino-acid polypeptide reads, in one-letter code: Cytochrome c oxidase subunit 2 (227 aa).

The Mitochondrial intermembrane segment spans residues 1 to 14 (MAYPFQLGLQDATS). Residues 15–45 (PIMEELLHFHDHTLMIVFLISSLVLYIITLM) traverse the membrane as a helical segment. Residues 46-59 (LTTKLTHTSTMDAQ) are Mitochondrial matrix-facing. The chain crosses the membrane as a helical span at residues 60–87 (EVETVWTILPAIILILIALPSLRILYMM). Over 88–227 (DEINNPSLTV…YFETWSALMV (140 aa)) the chain is Mitochondrial intermembrane. Residues histidine 161, cysteine 196, glutamate 198, cysteine 200, histidine 204, and methionine 207 each contribute to the Cu cation site. Glutamate 198 is a binding site for Mg(2+). Phosphotyrosine is present on tyrosine 218.

It belongs to the cytochrome c oxidase subunit 2 family. In terms of assembly, component of the cytochrome c oxidase (complex IV, CIV), a multisubunit enzyme composed of 14 subunits. The complex is composed of a catalytic core of 3 subunits MT-CO1, MT-CO2 and MT-CO3, encoded in the mitochondrial DNA, and 11 supernumerary subunits COX4I, COX5A, COX5B, COX6A, COX6B, COX6C, COX7A, COX7B, COX7C, COX8 and NDUFA4, which are encoded in the nuclear genome. The complex exists as a monomer or a dimer and forms supercomplexes (SCs) in the inner mitochondrial membrane with NADH-ubiquinone oxidoreductase (complex I, CI) and ubiquinol-cytochrome c oxidoreductase (cytochrome b-c1 complex, complex III, CIII), resulting in different assemblies (supercomplex SCI(1)III(2)IV(1) and megacomplex MCI(2)III(2)IV(2)). Found in a complex with TMEM177, COA6, COX18, COX20, SCO1 and SCO2. Interacts with TMEM177 in a COX20-dependent manner. Interacts with COX20. Interacts with COX16. Cu cation serves as cofactor.

It localises to the mitochondrion inner membrane. It carries out the reaction 4 Fe(II)-[cytochrome c] + O2 + 8 H(+)(in) = 4 Fe(III)-[cytochrome c] + 2 H2O + 4 H(+)(out). Component of the cytochrome c oxidase, the last enzyme in the mitochondrial electron transport chain which drives oxidative phosphorylation. The respiratory chain contains 3 multisubunit complexes succinate dehydrogenase (complex II, CII), ubiquinol-cytochrome c oxidoreductase (cytochrome b-c1 complex, complex III, CIII) and cytochrome c oxidase (complex IV, CIV), that cooperate to transfer electrons derived from NADH and succinate to molecular oxygen, creating an electrochemical gradient over the inner membrane that drives transmembrane transport and the ATP synthase. Cytochrome c oxidase is the component of the respiratory chain that catalyzes the reduction of oxygen to water. Electrons originating from reduced cytochrome c in the intermembrane space (IMS) are transferred via the dinuclear copper A center (CU(A)) of subunit 2 and heme A of subunit 1 to the active site in subunit 1, a binuclear center (BNC) formed by heme A3 and copper B (CU(B)). The BNC reduces molecular oxygen to 2 water molecules using 4 electrons from cytochrome c in the IMS and 4 protons from the mitochondrial matrix. In Vulpes macrotis (Kit fox), this protein is Cytochrome c oxidase subunit 2 (MT-CO2).